A 195-amino-acid chain; its full sequence is HTH-type transcriptional regulator BetI (195 aa).

The 61-residue stretch at 8-68 folds into the HTH tetR-type domain; it reads PIRRRQLIDA…ATMRDITSQL (61 aa). The segment at residues 31-50 is a DNA-binding region (H-T-H motif); it reads TIAQIARRAGVSTGIISHYF.

It functions in the pathway amine and polyamine biosynthesis; betaine biosynthesis via choline pathway [regulation]. Its function is as follows. Repressor involved in the biosynthesis of the osmoprotectant glycine betaine. It represses transcription of the choline transporter BetT and the genes of BetAB involved in the synthesis of glycine betaine. The protein is HTH-type transcriptional regulator BetI of Klebsiella pneumoniae (strain 342).